Reading from the N-terminus, the 302-residue chain is Sulfotransferase 1C4 (302 aa).

Lys-55–Trp-60 provides a ligand contact to 3'-phosphoadenylyl sulfate. Lys-113–His-115 is a binding site for substrate. Catalysis depends on His-115, which acts as the Proton acceptor. Residues Arg-137, Ser-145, Tyr-200, Thr-234–Met-239, and Phe-262–Gly-266 each bind 3'-phosphoadenylyl sulfate.

The protein belongs to the sulfotransferase 1 family. In terms of tissue distribution, expressed at high levels in fetal lung and kidney and at low levels in fetal heart, adult kidney, ovary and spinal cord.

The protein localises to the cytoplasm. Its subcellular location is the cytosol. The enzyme catalyses a phenol + 3'-phosphoadenylyl sulfate = an aryl sulfate + adenosine 3',5'-bisphosphate + H(+). The catalysed reaction is 17beta-estradiol + 3'-phosphoadenylyl sulfate = 17beta-estradiol 3-sulfate + adenosine 3',5'-bisphosphate + H(+). It catalyses the reaction bisphenol A + 3'-phosphoadenylyl sulfate = bisphenyl A sulfate + adenosine 3',5'-bisphosphate + H(+). In terms of biological role, sulfotransferase that utilizes 3'-phospho-5'-adenylyl sulfate (PAPS) as sulfonate donor to catalyze the sulfate conjugation of phenolic compounds. Can also sulfonate estrogenic compounds, however, the dietary flavonoids (phytoestrogen) and environmental estrogens, like bisphenol A are better substrates than 17beta-estradiol (E2). Mediates the sulfation of doxorubicin and its analog epirubicin, two antitumor anthracyclines. This is Sulfotransferase 1C4 from Homo sapiens (Human).